The chain runs to 474 residues: uncharacterized protein (474 aa).

The first 23 residues, 1-23 (MLRRYLTLSFSSLLLLALLFLTG), serve as a signal peptide directing secretion. Residue C24 is the site of N-palmitoyl cysteine attachment. Residue C24 is the site of S-diacylglycerol cysteine attachment.

This sequence belongs to the MG067/MG068/MG395 family.

The protein localises to the cell membrane. This is an uncharacterized protein from Mycoplasma genitalium (strain ATCC 33530 / DSM 19775 / NCTC 10195 / G37) (Mycoplasmoides genitalium).